We begin with the raw amino-acid sequence, 213 residues long: Cytochrome b-c1 complex subunit Rieske, mitochondrial (213 aa).

The N-terminal 29 residues, Met-1–Leu-29, are a transit peptide targeting the mitochondrion. At Ser-30–Gln-47 the chain is on the mitochondrial matrix side. Residues Gly-48–Ser-77 traverse the membrane as a helical segment. Residues Ser-78–Gly-213 lie on the Mitochondrial intermembrane side of the membrane. In terms of domain architecture, Rieske spans Arg-116–Leu-211. [2Fe-2S] cluster contacts are provided by Cys-156, His-158, Cys-175, and His-178. Cys-161 and Cys-177 form a disulfide bridge.

It belongs to the Rieske iron-sulfur protein family. In terms of assembly, component of the ubiquinol-cytochrome c oxidoreductase (cytochrome b-c1 complex, complex III, CIII), a multisubunit enzyme composed of 10 subunits. The complex is composed of 3 respiratory subunits cytochrome b (COB), cytochrome c1 (CYT1) and Rieske protein (RIP1), 2 core protein subunits COR1 and QCR2, and 5 low-molecular weight protein subunits QCR6, QCR7, QCR8, QCR9 and QCR10. The complex exists as an obligatory dimer and forms supercomplexes (SCs) in the inner mitochondrial membrane with a monomer or a dimer of cytochrome c oxidase (complex IV, CIV), resulting in 2 different assemblies (supercomplexes III(2)IV and III(2)IV(2)). The cofactor is [2Fe-2S] cluster.

The protein resides in the mitochondrion inner membrane. It carries out the reaction a quinol + 2 Fe(III)-[cytochrome c](out) = a quinone + 2 Fe(II)-[cytochrome c](out) + 2 H(+)(out). Functionally, component of the ubiquinol-cytochrome c oxidoreductase, a multisubunit transmembrane complex that is part of the mitochondrial electron transport chain which drives oxidative phosphorylation. The complex plays an important role in the uptake of multiple carbon sources present in different host niches. The protein is Cytochrome b-c1 complex subunit Rieske, mitochondrial of Candida albicans (strain SC5314 / ATCC MYA-2876) (Yeast).